We begin with the raw amino-acid sequence, 108 residues long: uncharacterized protein (108 aa).

Positions 1–10 (MSGISLTPVK) are enriched in polar residues. 2 disordered regions span residues 1–63 (MSGI…RPPR) and 83–108 (VLSP…PRTQ). The segment covering 33–62 (YVDRARPSADAKEHCAASDPEEWHSGDRPP) has biased composition (basic and acidic residues).

This is an uncharacterized protein from Gallid herpesvirus 2 (strain Chicken/Md5/ATCC VR-987) (GaHV-2).